The sequence spans 333 residues: GTPase Obg (333 aa).

An Obg domain is found at 1-159 (MQFIDLAEIH…RHLRLELKLL (159 aa)). Residues 160 to 328 (AEVGIIGLPN…LLEAVWQELG (169 aa)) enclose the OBG-type G domain. GTP-binding positions include 166-173 (GLPNAGKS), 191-195 (FTTLV), 213-216 (DIPG), 280-283 (NKID), and 309-311 (SAV). The Mg(2+) site is built by Ser173 and Thr193.

It belongs to the TRAFAC class OBG-HflX-like GTPase superfamily. OBG GTPase family. In terms of assembly, monomer. It depends on Mg(2+) as a cofactor.

The protein resides in the cytoplasm. In terms of biological role, an essential GTPase which binds GTP, GDP and possibly (p)ppGpp with moderate affinity, with high nucleotide exchange rates and a fairly low GTP hydrolysis rate. Plays a role in control of the cell cycle, stress response, ribosome biogenesis and in those bacteria that undergo differentiation, in morphogenesis control. In Thermosynechococcus vestitus (strain NIES-2133 / IAM M-273 / BP-1), this protein is GTPase Obg.